We begin with the raw amino-acid sequence, 395 residues long: NAD(P)H-quinone oxidoreductase subunit H, chloroplastic (395 aa).

This sequence belongs to the complex I 49 kDa subunit family. In terms of assembly, NDH is composed of at least 16 different subunits, 5 of which are encoded in the nucleus.

Its subcellular location is the plastid. It localises to the chloroplast thylakoid membrane. The enzyme catalyses a plastoquinone + NADH + (n+1) H(+)(in) = a plastoquinol + NAD(+) + n H(+)(out). It catalyses the reaction a plastoquinone + NADPH + (n+1) H(+)(in) = a plastoquinol + NADP(+) + n H(+)(out). Functionally, NDH shuttles electrons from NAD(P)H:plastoquinone, via FMN and iron-sulfur (Fe-S) centers, to quinones in the photosynthetic chain and possibly in a chloroplast respiratory chain. The immediate electron acceptor for the enzyme in this species is believed to be plastoquinone. Couples the redox reaction to proton translocation, and thus conserves the redox energy in a proton gradient. The chain is NAD(P)H-quinone oxidoreductase subunit H, chloroplastic from Staurastrum punctulatum (Green alga).